Reading from the N-terminus, the 242-residue chain is Biosynthetic peptidoglycan transglycosylase (242 aa).

A helical transmembrane segment spans residues 21 to 41 (VALVVFWGGGIALFSVVPVPF).

It belongs to the glycosyltransferase 51 family.

It localises to the cell inner membrane. It carries out the reaction [GlcNAc-(1-&gt;4)-Mur2Ac(oyl-L-Ala-gamma-D-Glu-L-Lys-D-Ala-D-Ala)](n)-di-trans,octa-cis-undecaprenyl diphosphate + beta-D-GlcNAc-(1-&gt;4)-Mur2Ac(oyl-L-Ala-gamma-D-Glu-L-Lys-D-Ala-D-Ala)-di-trans,octa-cis-undecaprenyl diphosphate = [GlcNAc-(1-&gt;4)-Mur2Ac(oyl-L-Ala-gamma-D-Glu-L-Lys-D-Ala-D-Ala)](n+1)-di-trans,octa-cis-undecaprenyl diphosphate + di-trans,octa-cis-undecaprenyl diphosphate + H(+). The protein operates within cell wall biogenesis; peptidoglycan biosynthesis. Its function is as follows. Peptidoglycan polymerase that catalyzes glycan chain elongation from lipid-linked precursors. This Salmonella arizonae (strain ATCC BAA-731 / CDC346-86 / RSK2980) protein is Biosynthetic peptidoglycan transglycosylase.